A 733-amino-acid chain; its full sequence is MDLSMKKFAVRRFFSVYLRRKSRSKSSSLSRLEEEGVVKEIDISHHVKEGFEKADPSQFELLKVLGQGSYGKVFLVRKVKGSDAGQLYAMKVLKKATLKVRDRVRSKMERDILAEVNHPFIVKLHYAFQTEGKLYLILDFLRGGDLFTRLSKEVMFTEEDVKFYLAELALALDHLHSLGIIYRDLKPENILLDEEGHIKITDFGLSKEAIDHDKRAYSFCGTIEYMAPEVVNRRGHTQSADWWSFGVLMFEMLTGSLPFQGKDRKETMALILKAKLGMPQFLSGEAQSLLRALFKRNPCNRLGAGIDGVEEIKRHPFFVTIDWNTLYRKEIKPPFKPAVGRPEDTFHFDPEFTARTPTDSPGVPPSANAHHLFRGFSFVASSLIQEPSQQDLHKVPVHPIVQQLHGNNIHFTDGYEIKEDIGVGSYSVCKRCVHKATDTEYAVKIIDKSKRDPSEEIEILLRYGQHPNIITLKDVYDDGKFVYLVMELMRGGELLDRILRQRYFSEREASDVLCTITKTMDYLHSQGVVHRDLKPSNILYRDESGSPESIRVCDFGFAKQLRAGNGLLMTPCYTANFVAPEVLKRQGYDAACDIWSLGILLYTMLAGFTPFANGPDDTPEEILARIGSGKYALSGGNWDSISDAAKDVVSKMLHVDPHQRLTAMQVLKHPWVVNREYLSPNQLSRQDVHLVKGAMAATYFALNRTPQAPRLEPVLSSNLAQRRGMKRLTSTRL.

One can recognise a Protein kinase 1 domain in the interval 59–318; the sequence is FELLKVLGQG…VEEIKRHPFF (260 aa). Residues 65–73 and Lys91 each bind ATP; that span reads LGQGSYGKV. The active-site Proton acceptor is the Asp184. Ser218 carries the phosphoserine; by PDPK1 modification. The AGC-kinase C-terminal domain occupies 319–388; that stretch reads VTIDWNTLYR…VASSLIQEPS (70 aa). Ser377 is subject to Phosphoserine. Positions 415-672 constitute a Protein kinase 2 domain; it reads YEIKEDIGVG…AMQVLKHPWV (258 aa). ATP is bound by residues 421-429 and Lys444; that span reads IGVGSYSVC. Asp532 acts as the Proton acceptor in catalysis.

The protein belongs to the protein kinase superfamily. AGC Ser/Thr protein kinase family. S6 kinase subfamily. As to quaternary structure, forms a complex with either MAPK1/ERK2 or MAPK3/ERK1 in quiescent cells. Transiently dissociates following mitogenic stimulation. Interacts with FBXO5; cooperate to induce the metaphase arrest of early blastomeres; increases and stabilizes interaction of FBXO5 with CDC20. Mg(2+) is required as a cofactor. Activated by phosphorylation at Ser-218 by PDPK1. Autophosphorylated on Ser-377, as part of the activation process. May be phosphorylated at Thr-356 and Ser-360 by MAPK1/ERK2 and MAPK3/ERK1. Post-translationally, N-terminal myristoylation results in an activated kinase in the absence of added growth factors. Widely expressed with higher expression in lung, skeletal muscle, brain, uterus, ovary, thyroid and prostate.

The protein localises to the nucleus. The protein resides in the cytoplasm. It carries out the reaction L-seryl-[protein] + ATP = O-phospho-L-seryl-[protein] + ADP + H(+). It catalyses the reaction L-threonyl-[protein] + ATP = O-phospho-L-threonyl-[protein] + ADP + H(+). Upon extracellular signal or mitogen stimulation, phosphorylated at Thr-570 in the C-terminal kinase domain (CTKD) by MAPK1/ERK2 and MAPK3/ERK1. The activated CTKD then autophosphorylates Ser-377, allowing binding of PDPK1, which in turn phosphorylates Ser-218 in the N-terminal kinase domain (NTDK) leading to the full activation of the protein and subsequent phosphorylation of the substrates by the NTKD. Its function is as follows. Serine/threonine-protein kinase that acts downstream of ERK (MAPK1/ERK2 and MAPK3/ERK1) signaling and mediates mitogenic and stress-induced activation of transcription factors, regulates translation, and mediates cellular proliferation, survival, and differentiation. May function as tumor suppressor in epithelial ovarian cancer cells. In Homo sapiens (Human), this protein is Ribosomal protein S6 kinase alpha-2 (RPS6KA2).